Consider the following 218-residue polypeptide: Ribose-5-phosphate isomerase A (218 aa).

Residues 28–31, 81–84, and 94–97 contribute to the substrate site; these read TGST, DGAD, and KGGG. Glutamate 103 acts as the Proton acceptor in catalysis. Lysine 121 serves as a coordination point for substrate.

It belongs to the ribose 5-phosphate isomerase family. Homodimer.

The catalysed reaction is aldehydo-D-ribose 5-phosphate = D-ribulose 5-phosphate. The protein operates within carbohydrate degradation; pentose phosphate pathway; D-ribose 5-phosphate from D-ribulose 5-phosphate (non-oxidative stage): step 1/1. In terms of biological role, catalyzes the reversible conversion of ribose-5-phosphate to ribulose 5-phosphate. This is Ribose-5-phosphate isomerase A from Pseudoalteromonas atlantica (strain T6c / ATCC BAA-1087).